The chain runs to 338 residues: Glyceraldehyde-3-phosphate dehydrogenase 2 (338 aa).

NAD(+) is bound by residues 11–12, Asp-33, and Arg-78; that span reads RI. Residues 149–151, Thr-180, 209–210, and Arg-232 contribute to the D-glyceraldehyde 3-phosphate site; these read SCT and TG. Cys-150 serves as the catalytic Nucleophile. Asn-314 lines the NAD(+) pocket.

It belongs to the glyceraldehyde-3-phosphate dehydrogenase family. Homotetramer.

The protein localises to the cytoplasm. The catalysed reaction is D-glyceraldehyde 3-phosphate + phosphate + NAD(+) = (2R)-3-phospho-glyceroyl phosphate + NADH + H(+). Its pathway is carbohydrate degradation; glycolysis; pyruvate from D-glyceraldehyde 3-phosphate: step 1/5. The protein is Glyceraldehyde-3-phosphate dehydrogenase 2 (gpd2) of Agaricus bisporus (White button mushroom).